The primary structure comprises 374 residues: Chaperone protein DnaJ (374 aa).

Residues 5-70 (DYYEVLGVAR…DKRARYDRFG (66 aa)) form the J domain. The CR-type zinc finger occupies 135–213 (GDEVTLRLPK…CKGSGILQQV (79 aa)). Zn(2+)-binding residues include Cys-148, Cys-151, Cys-165, Cys-168, Cys-187, Cys-190, Cys-201, and Cys-204. 4 CXXCXGXG motif repeats span residues 148 to 155 (CDECNGSG), 165 to 172 (CRHCGGNG), 187 to 194 (CPVCRGEG), and 201 to 208 (CPKCKGSG).

This sequence belongs to the DnaJ family. Homodimer. Zn(2+) is required as a cofactor.

It localises to the cytoplasm. In terms of biological role, participates actively in the response to hyperosmotic and heat shock by preventing the aggregation of stress-denatured proteins and by disaggregating proteins, also in an autonomous, DnaK-independent fashion. Unfolded proteins bind initially to DnaJ; upon interaction with the DnaJ-bound protein, DnaK hydrolyzes its bound ATP, resulting in the formation of a stable complex. GrpE releases ADP from DnaK; ATP binding to DnaK triggers the release of the substrate protein, thus completing the reaction cycle. Several rounds of ATP-dependent interactions between DnaJ, DnaK and GrpE are required for fully efficient folding. Also involved, together with DnaK and GrpE, in the DNA replication of plasmids through activation of initiation proteins. In Nitratidesulfovibrio vulgaris (strain DSM 19637 / Miyazaki F) (Desulfovibrio vulgaris), this protein is Chaperone protein DnaJ.